Here is a 599-residue protein sequence, read N- to C-terminus: Stromal 70 kDa heat shock-related protein, chloroplastic (599 aa).

The interval 545–573 is disordered; sequence NQPGAGGEPGAAQAQHQEQSSARQIQRAK. Low complexity predominate over residues 554–568; the sequence is GAAQAQHQEQSSARQ.

It belongs to the heat shock protein 70 family.

It is found in the plastid. The protein localises to the chloroplast stroma. In terms of biological role, interacts with newly imported chloroplast proteins to assist in their maturation. The protein is Stromal 70 kDa heat shock-related protein, chloroplastic (CHSP70) of Spinacia oleracea (Spinach).